Reading from the N-terminus, the 411-residue chain is Citrate synthase (411 aa).

Active-site residues include His-304 and Asp-363.

Belongs to the citrate synthase family.

The enzyme catalyses oxaloacetate + acetyl-CoA + H2O = citrate + CoA + H(+). The protein operates within carbohydrate metabolism; tricarboxylic acid cycle; isocitrate from oxaloacetate: step 1/2. This Rickettsia canadensis protein is Citrate synthase (gltA).